We begin with the raw amino-acid sequence, 212 residues long: Riboflavin kinase (212 aa).

An H-T-H motif-like region spans residues 1–87 (MKMKTLFLLI…YEEISTALYS (87 aa)). Residues 88–212 (GFIVGEVISG…DGDKVRIEVV (125 aa)) form a riboflavin kinase region. 97-102 (GIGEGA) lines the CDP pocket. 2 residues coordinate Mg(2+): Thr-124 and Asn-126. FMN-binding residues include Thr-180 and Glu-188. 193–196 (VKLR) lines the CDP pocket.

Belongs to the archaeal riboflavin kinase family. Requires Mg(2+) as cofactor.

The catalysed reaction is riboflavin + CTP = CDP + FMN + H(+). Its pathway is cofactor biosynthesis; FMN biosynthesis; FMN from riboflavin (CTP route): step 1/1. In terms of biological role, catalyzes the CTP-dependent phosphorylation of riboflavin (vitamin B2) to form flavin mononucleotide (FMN). This is Riboflavin kinase (ribK) from Pyrococcus abyssi (strain GE5 / Orsay).